The sequence spans 65 residues: Small ribosomal subunit protein bS21 (65 aa).

It belongs to the bacterial ribosomal protein bS21 family.

This Chlorobium chlorochromatii (strain CaD3) protein is Small ribosomal subunit protein bS21.